The primary structure comprises 223 residues: Type III pantothenate kinase (223 aa).

An ATP-binding site is contributed by 17-24 (DIGNTHIH). Residues Tyr-81 and 85 to 88 (GIDR) contribute to the substrate site. Asp-87 (proton acceptor) is an active-site residue. K(+) is bound at residue Asp-102. Ser-105 contacts ATP. Thr-157 provides a ligand contact to substrate.

Belongs to the type III pantothenate kinase family. In terms of assembly, homodimer. NH4(+) is required as a cofactor. It depends on K(+) as a cofactor.

The protein localises to the cytoplasm. The catalysed reaction is (R)-pantothenate + ATP = (R)-4'-phosphopantothenate + ADP + H(+). It participates in cofactor biosynthesis; coenzyme A biosynthesis; CoA from (R)-pantothenate: step 1/5. Its function is as follows. Catalyzes the phosphorylation of pantothenate (Pan), the first step in CoA biosynthesis. The chain is Type III pantothenate kinase from Helicobacter pylori (strain HPAG1).